Reading from the N-terminus, the 299-residue chain is MSEFRSGFVCFVGRPNTGKSTLTNALVGTKVAITSNRPQTTRHTIRGIVHRDEFQIILVDTPGLHRPRTLLGQRLNDLVKTTYSEVDVIGLCIPADEAIGPGDRWIHEQIRAVAPRTTLVVIVTKIDKVPKDRVAAQLMAVSELIGPDAEIVPVSATTGEQLDVLTDVLAGKLPPGPAFYPDGELTDEPEETLMAELIREAALEGVRDELPHSLAVVIDEVSPREDRDDLIDVHAILYVERDSQKGIVIGKGGARLREVGTAARLQIEKLLGTKVYLDLRVKIAKNWQRDPKQLGRLGF.

Residues 5–175 (RSGFVCFVGR…TDVLAGKLPP (171 aa)) enclose the Era-type G domain. The interval 13-20 (GRPNTGKS) is G1. GTP is bound at residue 13-20 (GRPNTGKS). The interval 39-43 (QTTRH) is G2. Residues 60–63 (DTPG) are G3. GTP contacts are provided by residues 60–64 (DTPGL) and 124–127 (TKID). The tract at residues 124–127 (TKID) is G4. The interval 154 to 156 (VSA) is G5. A KH type-2 domain is found at 206-285 (VRDELPHSLA…YLDLRVKIAK (80 aa)).

This sequence belongs to the TRAFAC class TrmE-Era-EngA-EngB-Septin-like GTPase superfamily. Era GTPase family. As to quaternary structure, monomer.

Its subcellular location is the cell envelope. It is found in the secreted. It localises to the cell wall. Functionally, exhibits GTPase activity. Binds RNA but is probably not involved in ribosome assembly in mycobacteria. The chain is GTPase Era from Mycobacterium sp. (strain JLS).